A 346-amino-acid chain; its full sequence is MNFKTLTMQWTGNSLILVDQRKLPHVVNYVECKSYAEVARAIKDMVVRGAPAIGATAAFGYVLGAKEAATLKNQNFIDVMKNVYDVLASTRPTAVNLFWALNRMEKCVDLSKAVDEILEDLEKEAIKIAEEDIRINKTIGTHGQTLLKDGCAVLTHCNAGALATVDYGTALGVIRAAVESGKKIKVYVDETRPYLQGARLTAWELLEIGVETILITDNMAGWVMKQGKIDAVIVGADRIAANGDVANKIGTYSVAVLSNQHGIPFYVAAPTSTIDIKIKNGSEIPIEERSHDEVTHVHGVKVAPDGVAVYNPAFDVTEHQLITAIITEKGILRPPYKENIAKLFGG.

Residues 48–50, R91, and Q196 contribute to the substrate site; that span reads RGA. D237 (proton donor) is an active-site residue. Residue 247-248 coordinates substrate; that stretch reads NK.

It belongs to the eIF-2B alpha/beta/delta subunits family. MtnA subfamily.

It carries out the reaction 5-(methylsulfanyl)-alpha-D-ribose 1-phosphate = 5-(methylsulfanyl)-D-ribulose 1-phosphate. The protein operates within amino-acid biosynthesis; L-methionine biosynthesis via salvage pathway; L-methionine from S-methyl-5-thio-alpha-D-ribose 1-phosphate: step 1/6. In terms of biological role, catalyzes the interconversion of methylthioribose-1-phosphate (MTR-1-P) into methylthioribulose-1-phosphate (MTRu-1-P). This chain is Methylthioribose-1-phosphate isomerase 1, found in Pseudothermotoga lettingae (strain ATCC BAA-301 / DSM 14385 / NBRC 107922 / TMO) (Thermotoga lettingae).